The following is a 129-amino-acid chain: uncharacterized protein (129 aa).

The next 2 membrane-spanning stretches (helical) occupy residues 4–24 (FKFLKCVYLCFMVFVRLILII) and 37–57 (VISLLFIILTFLLILGCDLSI).

It to B.burgdorferi BBF20.

The protein resides in the cell membrane. This is an uncharacterized protein from Borreliella burgdorferi (strain ATCC 35210 / DSM 4680 / CIP 102532 / B31) (Borrelia burgdorferi).